The primary structure comprises 267 residues: UPF0328 protein ECU06_0070 (267 aa).

The protein belongs to the UPF0328 family.

The protein is UPF0328 protein ECU06_0070 of Encephalitozoon cuniculi (strain GB-M1) (Microsporidian parasite).